The sequence spans 118 residues: Large ribosomal subunit protein bL19 (118 aa).

Belongs to the bacterial ribosomal protein bL19 family.

In terms of biological role, this protein is located at the 30S-50S ribosomal subunit interface and may play a role in the structure and function of the aminoacyl-tRNA binding site. This chain is Large ribosomal subunit protein bL19, found in Frankia alni (strain DSM 45986 / CECT 9034 / ACN14a).